The sequence spans 536 residues: Membrane protein insertase YidC (536 aa).

Helical transmembrane passes span 7-27 (LLVM…QQDF), 332-352 (FWLL…IMGV), 411-431 (MGGC…YWTF), 449-469 (LSAQ…MFLL), and 488-508 (FMPV…VLYW).

This sequence belongs to the OXA1/ALB3/YidC family. Type 1 subfamily. As to quaternary structure, interacts with the Sec translocase complex via SecD. Specifically interacts with transmembrane segments of nascent integral membrane proteins during membrane integration.

The protein localises to the cell inner membrane. Required for the insertion and/or proper folding and/or complex formation of integral membrane proteins into the membrane. Involved in integration of membrane proteins that insert both dependently and independently of the Sec translocase complex, as well as at least some lipoproteins. Aids folding of multispanning membrane proteins. The polypeptide is Membrane protein insertase YidC (Haemophilus ducreyi (strain 35000HP / ATCC 700724)).